A 146-amino-acid polypeptide reads, in one-letter code: Large ribosomal subunit protein uL15 (146 aa).

Residues 1–54 (MTLRLNELAPAEGAKRDNRRLGRGIGSGVGKTGGRGVKGQKSRKSGGVRPGFEG) form a disordered region. Over residues 23–37 (RGIGSGVGKTGGRGV) the composition is skewed to gly residues.

Belongs to the universal ribosomal protein uL15 family. In terms of assembly, part of the 50S ribosomal subunit.

Functionally, binds to the 23S rRNA. The chain is Large ribosomal subunit protein uL15 from Acinetobacter baylyi (strain ATCC 33305 / BD413 / ADP1).